Here is a 402-residue protein sequence, read N- to C-terminus: MREVLGTALTSSSQKALLLGSGELGKEVVIELQRLGVEVVAVDRYDRAPAMHVAHRRYVIDMLDYDQVVDVVRRERPDVIIPEVEAINTDALVDLEKEGYFVVPNARAVKITMNRIELRRLAAEKVGVPTTRYAFAHNEDEAAEACEKVGYPCLIKPEMSSSGHGHTLASSPEEAREGFKRALKEARGKSERAIVEEFVEIDRELTALTYRHDTGNGIETVPLPPVEHKRPKGIYYYYESWHPATVNDEVVKKAKDIAVKVVNELGGLGIFGVEILVTKDGRVLFSEVSPRPHDTGLVTLASMELSEFAIHARAVLGLPVPEPKLLTPAASRVVLAEEALEPPCLKGVGEALKVKGVQLRWFAKPRSYKERRMGVLLATGSTVEEALERVRRAAGFLKVVKC.

Residues 23–24 (EL) and glutamate 83 contribute to the N(1)-(5-phospho-beta-D-ribosyl)glycinamide site. Residues arginine 115, lysine 156, 196–199 (EEFV), and glutamate 204 contribute to the ATP site. The region spanning 120 to 316 (RLAAEKVGVP…EFAIHARAVL (197 aa)) is the ATP-grasp domain. Mg(2+)-binding residues include glutamate 274 and glutamate 287. N(1)-(5-phospho-beta-D-ribosyl)glycinamide contacts are provided by residues aspartate 294, lysine 364, and 371-372 (RR).

This sequence belongs to the PurK/PurT family. In terms of assembly, homodimer.

The enzyme catalyses N(1)-(5-phospho-beta-D-ribosyl)glycinamide + formate + ATP = N(2)-formyl-N(1)-(5-phospho-beta-D-ribosyl)glycinamide + ADP + phosphate + H(+). Its pathway is purine metabolism; IMP biosynthesis via de novo pathway; N(2)-formyl-N(1)-(5-phospho-D-ribosyl)glycinamide from N(1)-(5-phospho-D-ribosyl)glycinamide (formate route): step 1/1. Involved in the de novo purine biosynthesis. Catalyzes the transfer of formate to 5-phospho-ribosyl-glycinamide (GAR), producing 5-phospho-ribosyl-N-formylglycinamide (FGAR). Formate is provided by PurU via hydrolysis of 10-formyl-tetrahydrofolate. The sequence is that of Formate-dependent phosphoribosylglycinamide formyltransferase from Ignicoccus hospitalis (strain KIN4/I / DSM 18386 / JCM 14125).